A 323-amino-acid polypeptide reads, in one-letter code: Prostaglandin F synthase 1 (323 aa).

NADP(+) is bound by residues 20-24 (GFGTY) and Asp50. The active-site Proton donor is the Tyr55. His117 is a substrate binding site. NADP(+)-binding positions include 166-167 (SN), Gln190, 216-221 (YAALGA), and 270-280 (KSFNKKRIKEN).

It belongs to the aldo/keto reductase family. In terms of assembly, monomer. The N-terminus is blocked.

The protein resides in the cytoplasm. It carries out the reaction prostaglandin F2alpha + NADP(+) = prostaglandin D2 + NADPH + H(+). Its pathway is lipid metabolism; prostaglandin biosynthesis. Its function is as follows. Catalyzes the reduction of PGD(2) and PGH(2) to PGF(2 alpha) and a stereoisomer, respectively. It has a broad substrate specificity and also reduces other carbonyl compounds. This Bos taurus (Bovine) protein is Prostaglandin F synthase 1.